Consider the following 179-residue polypeptide: ATP-dependent protease subunit HslV (179 aa).

Residue Thr6 is part of the active site. Na(+) contacts are provided by Ser164, Cys167, and Thr170.

It belongs to the peptidase T1B family. HslV subfamily. As to quaternary structure, a double ring-shaped homohexamer of HslV is capped on each side by a ring-shaped HslU homohexamer. The assembly of the HslU/HslV complex is dependent on binding of ATP.

Its subcellular location is the cytoplasm. It catalyses the reaction ATP-dependent cleavage of peptide bonds with broad specificity.. Its activity is regulated as follows. Allosterically activated by HslU binding. Protease subunit of a proteasome-like degradation complex believed to be a general protein degrading machinery. The chain is ATP-dependent protease subunit HslV from Listeria innocua serovar 6a (strain ATCC BAA-680 / CLIP 11262).